Here is a 147-residue protein sequence, read N- to C-terminus: Shadow of prion protein (147 aa).

Positions 1–24 are cleaved as a signal peptide; the sequence is MNWTAATCWALLLAAAFLCDSCSA. The span at 26-43 shows a compositional bias: gly residues; that stretch reads GGRGGARGSARGVRGGAR. Residues 26–45 are disordered; sequence GGRGGARGSARGVRGGARGA. Asparagine 107 is a glycosylation site (N-linked (GlcNAc...) asparagine). Residue glycine 122 is the site of GPI-anchor amidated glycine attachment. Positions 123–147 are cleaved as a propeptide — removed in mature form; sequence SGSVHSPRICLLLGGTLGALELLRP.

This sequence belongs to the SPRN family. Post-translationally, N-glycosylated. In terms of tissue distribution, mainly expressed in brain (at protein level). In brain, it is highly expressed in the hippocampus and cerebellum and is also expressed at lower level in other areas of the brain including the cerebral cortex, the thalamus and the medulla. In hippocampus and cerebellum it is highly expressed in the cell bodies of pyramidal cells and Purkinje cells, respectively.

It is found in the cell membrane. In terms of biological role, prion-like protein that has PrP(C)-like neuroprotective activity. May act as a modulator for the biological actions of normal and abnormal PrP. The sequence is that of Shadow of prion protein (Sprn) from Mus musculus (Mouse).